Here is a 65-residue protein sequence, read N- to C-terminus: Large ribosomal subunit protein bL35 (65 aa).

Residues 1-15 (MPKMKTKKSAAKRFQ) are compositionally biased toward basic residues. A disordered region spans residues 1 to 26 (MPKMKTKKSAAKRFQVRGSGSIKRGQ).

This sequence belongs to the bacterial ribosomal protein bL35 family.

The sequence is that of Large ribosomal subunit protein bL35 from Bordetella avium (strain 197N).